The following is a 146-amino-acid chain: Aspartate carbamoyltransferase regulatory chain (146 aa).

Residues Cys-102, Cys-107, Cys-131, and Cys-134 each coordinate Zn(2+).

This sequence belongs to the PyrI family. In terms of assembly, contains catalytic and regulatory chains. Zn(2+) serves as cofactor.

Its function is as follows. Involved in allosteric regulation of aspartate carbamoyltransferase. The sequence is that of Aspartate carbamoyltransferase regulatory chain from Clostridium botulinum (strain Okra / Type B1).